Consider the following 427-residue polypeptide: Enolase (427 aa).

Gln163 contributes to the (2R)-2-phosphoglycerate binding site. The active-site Proton donor is Glu205. Asp242, Glu285, and Asp312 together coordinate Mg(2+). 4 residues coordinate (2R)-2-phosphoglycerate: Lys337, Arg366, Ser367, and Lys388. Lys337 acts as the Proton acceptor in catalysis.

This sequence belongs to the enolase family. Requires Mg(2+) as cofactor.

It is found in the cytoplasm. It localises to the secreted. Its subcellular location is the cell surface. It carries out the reaction (2R)-2-phosphoglycerate = phosphoenolpyruvate + H2O. It functions in the pathway carbohydrate degradation; glycolysis; pyruvate from D-glyceraldehyde 3-phosphate: step 4/5. Its function is as follows. Catalyzes the reversible conversion of 2-phosphoglycerate (2-PG) into phosphoenolpyruvate (PEP). It is essential for the degradation of carbohydrates via glycolysis. This Beijerinckia indica subsp. indica (strain ATCC 9039 / DSM 1715 / NCIMB 8712) protein is Enolase.